A 261-amino-acid chain; its full sequence is Phosphoinositide-3-kinase-interacting protein 1 (261 aa).

Residues 1–21 (MLLAWVRTILVSNMLLAEAYG) form the signal peptide. Over 22–166 (SGGCFWDNGH…NSKEKKDLGT (145 aa)) the chain is Extracellular. The Kringle domain occupies 24 to 101 (GCFWDNGHLY…EKRPCQDLRC (78 aa)). 3 disulfide bridges follow: cysteine 25-cysteine 101, cysteine 46-cysteine 82, and cysteine 70-cysteine 96. A compositionally biased stretch (basic and acidic residues) spans 90–101 (APEKRPCQDLRC). A disordered region spans residues 90–122 (APEKRPCQDLRCPDTTSQGLPTSATETEEAAEV). A helical membrane pass occupies residues 167-187 (LGYVLGITMMVIIVVIGAGIV). At 188–261 (LGYTYKRGKD…LMGQAGTPGA (74 aa)) the chain is on the cytoplasmic side.

The protein localises to the cell membrane. In terms of biological role, negative regulator of hepatic phosphatidylinositol 3-kinase (PI3K) activity. In Bos taurus (Bovine), this protein is Phosphoinositide-3-kinase-interacting protein 1 (PIK3IP1).